Consider the following 467-residue polypeptide: Chromosomal replication initiator protein DnaA (467 aa).

Residues 1–84 (MDISLDQLWD…LQVEFSVSPH (84 aa)) form a domain I, interacts with DnaA modulators region. Residues 84 to 125 (HASVEAEPPSRAISPTSGRAGSLPASTTLGLEVGGSLPMRAP) are domain II. The disordered stretch occupies residues 89 to 108 (AEPPSRAISPTSGRAGSLPA). A compositionally biased stretch (polar residues) spans 96–108 (ISPTSGRAGSLPA). The tract at residues 126–342 (DLNPKYSFSR…GALIRAVAYV (217 aa)) is domain III, AAA+ region. Gly170, Gly172, Lys173, and Thr174 together coordinate ATP. Residues 343–467 (SISGLPMSVE…LRVVANSRSS (125 aa)) form a domain IV, binds dsDNA region.

Belongs to the DnaA family. In terms of assembly, oligomerizes as a right-handed, spiral filament on DNA at oriC.

The protein localises to the cytoplasm. In terms of biological role, plays an essential role in the initiation and regulation of chromosomal replication. ATP-DnaA binds to the origin of replication (oriC) to initiate formation of the DNA replication initiation complex once per cell cycle. Binds the DnaA box (a 9 base pair repeat at the origin) and separates the double-stranded (ds)DNA. Forms a right-handed helical filament on oriC DNA; dsDNA binds to the exterior of the filament while single-stranded (ss)DNA is stabiized in the filament's interior. The ATP-DnaA-oriC complex binds and stabilizes one strand of the AT-rich DNA unwinding element (DUE), permitting loading of DNA polymerase. After initiation quickly degrades to an ADP-DnaA complex that is not apt for DNA replication. Binds acidic phospholipids. This Synechococcus sp. (strain JA-2-3B'a(2-13)) (Cyanobacteria bacterium Yellowstone B-Prime) protein is Chromosomal replication initiator protein DnaA.